Here is a 448-residue protein sequence, read N- to C-terminus: Beclin-1 (448 aa).

Met-1 carries the post-translational modification N-acetylmethionine. Ser-14 and Ser-29 each carry phosphoserine. Residues 47–66 (TTAQAKPGETQEEEANSGEE) are disordered. Residues Ser-88, Ser-91, and Ser-94 each carry the phosphoserine; by AMPK modification. The BH3 signature appears at 106 to 125 (TMENLSRRLKVTGDLFDIMS). The interaction with BCL2 and BCL2L1 isoform Bcl-X(L) stretch occupies residues 110 to 157 (LSRRLKVTGDLFDIMSGQTDVDHPLCEECTDTLLDQLDTQLNVTENEC). Thr-117 is modified (phosphothreonine; by DAPK1). Residues 140 to 268 (DTLLDQLDTQ…LDKLKKTNVF (129 aa)) are a coiled coil. The segment at 243-448 (DELKSVENQV…AWVSSQFYNK (206 aa)) is evolutionary conserved domain (ECD). Residues Lys-400 and Lys-435 each participate in a glycyl lysine isopeptide (Lys-Gly) (interchain with G-Cter in ubiquitin) cross-link. The required for membrane-association stretch occupies residues 423–448 (WTKALKFMLTNLKWGLAWVSSQFYNK).

This sequence belongs to the beclin family. A homodimeric form is proposed to exist; this metastable form readily transits to ATG14- or UVRAG-containing complexes with BECN1:UVRAG being more stable than BECN1:ATG14. Component of the PI3K (PI3KC3/PI3K-III/class III phosphatidylinositol 3-kinase) complex whose core is composed of the catalytic subunit PIK3C3, the regulatory subunit PIK3R4 and BECN1, and associates with additional regulatory/auxiliary subunits to form alternative complex forms. Accepted alternative complex forms containing a fourth regulatory subunit in a mutually exclusive manner are PI3K complex I (PI3KC3-C1) containing ATG14, and PI3K complex II (PI3KC3-C2) containing UVRAG. PI3KC3-C1 displays a V-shaped architecture with PIK3R4 serving as a bridge between PIK3C3 and the ATG14:BECN1 subcomplex. Both, PI3KC3-C1 and PI3KC3-C2, can associate with further regulatory subunits, such as RUBCN, SH3GLB1/Bif-1 and AMBRA1. PI3KC3-C1 probably associates with PIK3CB. Forms a complex with PPP2CA and AMBRA1; AMBRA1 and BECN1 components of the complex regulate MYC stability via different pathways. Component of the complex, at least composed of LRPPRC, BECN1 and BCL2; the interactions prevent BECN1 from forming an autophagy-inducing complex with PIK3C3. Interacts with AMBRA1, GOPC, GRID2 and PIK3CB. Interacts with BCL2 and BCL2L1 isoform Bcl-X(L); the interaction inhibits BECN1 function in promoting autophagy by interfering with the formation of the PI3K complex. Interacts with cytosolic HMGB1; inhibits the interaction of BECN1 and BCL2 leading to promotion of autophagy. Interacts with USP10, USP13, VMP1, DAPK1. Interacts with the poly-Gln domain of ATXN3; the interaction causes deubiquitination at Lys-400 and stabilizes BECN1. Interacts with SLAMF1. Interacts with TRIM5; the interaction causes activation of BECN1 by causing its dissociation from its inhibitors BCL2 and TAB2. Interacts with active ULK1 (phosphorylated on 'Ser-317') and MEFV simultaneously. Interacts with TRIM50. Interacts with TRIM16. Interacts with WDR81 and WDR91; negatively regulates the PI3 kinase/PI3K activity associated with endosomal membranes. Interacts with LAPTM4B; competes with EGFR for LAPTM4B binding; regulates EGFR activity. Interacts with ATG14; this interaction is increased in the absence of TMEM39A. Interacts with WASHC1; preventing interaction with AMBRA1 and the DCX(AMBRA1) complex and subsequent ubiquitination. Interacts with TRIM17. Interacts with BCL2L10/BCL-B (via BH1 domain). Interacts with SH3BGRL. Interacts with Irgm1; enhancing BECN1-interacting partners and influencing the composition of the BECN1 complex. Interacts with ARMC3. Interacts with LRPPRC. In terms of assembly, (Microbial infection) Interacts with murine gammaherpesvirus 68 M11; the viral protein binds BECN1 with higher affinity than cellular BCL2. Phosphorylation at Thr-117 by DAPK1 reduces its interaction with BCL2 and BCL2L1 and promotes induction of autophagy. In response to autophagic stimuli, phosphorylated at serine residues by AMPK in an ATG14-dependent manner, and this phosphorylation is critical for maximally efficient autophagy. Post-translationally, polyubiquitinated by NEDD4, both with 'Lys-11'- and 'Lys-63'-linkages. 'Lys-11'-linked polyubiquitination leads to degradation and is enhanced when the stabilizing interaction partner VPS34 is depleted. Deubiquitinated by USP10 and USP13, leading to stabilize the PIK3C3/VPS34-containing complexes. Polyubiquitinated at Lys-400 with 'Lys-48'-linkages. 'Lys-48'-linked poyubiquitination of Lys-400 leads to degradation. Deubiquitinated by ATXN3, leading to stabilization. Ubiquitinated at Lys-435 via 'Lys-63'-linkage by the DCX(AMBRA1) complex, thereby increasing the association between BECN1 and PIK3C3 to promote PIK3C3 activity. 'Lys-48'-linked ubiquitination by RNF216 leads to proteasomal degradation and autophagy inhibition. In terms of processing, proteolytically processed by caspases including CASP8 and CASP3; the C-terminal fragments lack autophagy-inducing capacity and are proposed to induce apoptosis. Thus the cleavage is proposed to be an determinant to switch from autophagy to apoptosis pathways affecting cellular homeostasis including viral infections and survival of tumor cells.

The protein resides in the cytoplasm. It localises to the golgi apparatus. It is found in the trans-Golgi network membrane. Its subcellular location is the endosome membrane. The protein localises to the endoplasmic reticulum membrane. The protein resides in the mitochondrion membrane. It localises to the endosome. It is found in the cytoplasmic vesicle. Its subcellular location is the autophagosome. The protein localises to the mitochondrion. The protein resides in the nucleus. In terms of biological role, plays a central role in autophagy. Acts as a core subunit of different PI3K complex forms that mediate formation of phosphatidylinositol 3-phosphate and are believed to play a role in multiple membrane trafficking pathways: PI3KC3-C1 is involved in initiation of autophagosomes and PI3KC3-C2 in maturation of autophagosomes and endocytosis. Involved in regulation of degradative endocytic trafficking and required for the abscission step in cytokinesis, probably in the context of PI3KC3-C2. Essential for the formation of PI3KC3-C2 but not PI3KC3-C1 PI3K complex forms. Involved in endocytosis including endosome formation in neuronal cells. May play a role in antiviral host defense. Functionally, beclin-1-C 35 kDa localized to mitochondria can promote apoptosis; it induces the mitochondrial translocation of BAX and the release of proapoptotic factors. This is Beclin-1 (Becn1) from Mus musculus (Mouse).